The sequence spans 301 residues: Aquaporin NIP2-3 (301 aa).

Transmembrane regions (helical) follow at residues 57–77 (VISE…AASI) and 91–111 (SVAG…ISGA). The short motif at 114–116 (NPA) is the NPA 1 element. The next 3 membrane-spanning stretches (helical) occupy residues 132–154 (VPFY…KAVL), 172–192 (ALAI…AVAT), and 200–220 (LAGL…GPVS). Residues 225–227 (NPA) carry the NPA 2 motif. A helical transmembrane segment spans residues 238-258 (VFTGLWIYFLGPVVGTLSGAW).

The protein belongs to the MIP/aquaporin (TC 1.A.8) family. NIP (TC 1.A.8.12) subfamily.

The protein resides in the membrane. In terms of biological role, aquaporins facilitate the transport of water and small neutral solutes across cell membranes. This is Aquaporin NIP2-3 (NIP2-3) from Zea mays (Maize).